The sequence spans 127 residues: Gamma-synuclein (127 aa).

2 tandem repeats follow at residues 20 to 30 and 31 to 41. The 4 X 11 AA tandem repeats of [EGSA]-K-T-K-[EQ]-[GQ]-V-X(4) stretch occupies residues 20–67; it reads EKTKQGVTEAAEKTKEGVMYVGAKTKENVVQSVTSVAEKTKEQANAVS. One copy of the 3; approximate repeat lies at 42-56; that stretch reads AKTKENVVQSVTSVA. The stretch at 57–67 is repeat 4; the sequence is EKTKEQANAVS. Phosphoserine is present on residues serine 67 and serine 72. Residues 96 to 127 form a disordered region; that stretch reads RKEDLRPSAPQQEGEASKEKEEVAEEAQSGGD. Serine 124 is modified (phosphoserine; by BARK1, CaMK2 and CK2).

The protein belongs to the synuclein family. May be a centrosome-associated protein. Interacts with MYOC; affects its secretion and its aggregation. Post-translationally, phosphorylated. Phosphorylation by GRK5 appears to occur on residues distinct from the residue phosphorylated by other kinases. In terms of tissue distribution, highly expressed in brain, particularly in the substantia nigra. Also expressed in the corpus callosum, heart, skeletal muscle, ovary, testis, colon and spleen. Weak expression in pancreas, kidney and lung.

It is found in the cytoplasm. The protein resides in the perinuclear region. The protein localises to the cytoskeleton. Its subcellular location is the microtubule organizing center. It localises to the centrosome. It is found in the spindle. Plays a role in neurofilament network integrity. May be involved in modulating axonal architecture during development and in the adult. In vitro, increases the susceptibility of neurofilament-H to calcium-dependent proteases. May also function in modulating the keratin network in skin. Activates the MAPK and Elk-1 signal transduction pathway. This chain is Gamma-synuclein (SNCG), found in Homo sapiens (Human).